A 431-amino-acid polypeptide reads, in one-letter code: Fibrinogen C domain-containing protein 1 (431 aa).

At 1-3 (MLC) the chain is on the cytoplasmic side. Residues 4 to 24 (TVLLALAVLLAVAVTGAVLFL) form a helical; Signal-anchor for type II membrane protein membrane-spanning segment. Topologically, residues 25 to 431 (NHTHTPGTAP…MKIRPVREDR (407 aa)) are extracellular. Residues 205–428 (CATGSRPRDC…FSEMKIRPVR (224 aa)) enclose the Fibrinogen C-terminal domain. Cys-214 and Cys-243 are oxidised to a cystine. The N-linked (GlcNAc...) asparagine glycan is linked to Asn-310. The Ca(2+) site is built by Asp-363 and Asp-365. The cysteines at positions 371 and 384 are disulfide-linked.

As to quaternary structure, homotetramer; disulfide-linked.

It localises to the membrane. Its function is as follows. Acetyl group-binding receptor which shows a high-affinity and calcium-dependent binding to acetylated structures such as chitin, some N-acetylated carbohydrates, and amino acids, but not to their non-acetylated counterparts. Can facilitate the endocytosis of acetylated components. This Macaca fascicularis (Crab-eating macaque) protein is Fibrinogen C domain-containing protein 1 (FIBCD1).